A 172-amino-acid polypeptide reads, in one-letter code: 18.6 kDa class III heat shock protein (172 aa).

A disordered region spans residues 29 to 54 (RRSAGDHAHHAAHGHGQHRISGIGGG). A sHSP domain is found at 48-172 (ISGIGGGAPV…KTKSVQVTIA (125 aa)).

The protein belongs to the small heat shock protein (HSP20) family. In terms of assembly, may form oligomeric structures.

The protein localises to the cytoplasm. The polypeptide is 18.6 kDa class III heat shock protein (HSP18.6) (Oryza sativa subsp. japonica (Rice)).